The primary structure comprises 465 residues: Cysteine--tRNA ligase (465 aa).

Residue C30 participates in Zn(2+) binding. Residues 32-42 (ITVYDYCHVGH) carry the 'HIGH' region motif. C214, H239, and E243 together coordinate Zn(2+). The short motif at 271–275 (KMSKS) is the 'KMSKS' region element. K274 is a binding site for ATP.

The protein belongs to the class-I aminoacyl-tRNA synthetase family. As to quaternary structure, monomer. Zn(2+) is required as a cofactor.

The protein resides in the cytoplasm. The enzyme catalyses tRNA(Cys) + L-cysteine + ATP = L-cysteinyl-tRNA(Cys) + AMP + diphosphate. The protein is Cysteine--tRNA ligase of Burkholderia vietnamiensis (strain G4 / LMG 22486) (Burkholderia cepacia (strain R1808)).